A 257-amino-acid polypeptide reads, in one-letter code: Type III pantothenate kinase (257 aa).

6–13 (DVGNTNTV) lines the ATP pocket. Residues tyrosine 102 and 109 to 112 (GADR) contribute to the substrate site. The active-site Proton acceptor is aspartate 111. Aspartate 131 contacts K(+). Residue threonine 134 participates in ATP binding. Threonine 186 serves as a coordination point for substrate.

The protein belongs to the type III pantothenate kinase family. As to quaternary structure, homodimer. NH4(+) serves as cofactor. The cofactor is K(+).

The protein resides in the cytoplasm. The enzyme catalyses (R)-pantothenate + ATP = (R)-4'-phosphopantothenate + ADP + H(+). It functions in the pathway cofactor biosynthesis; coenzyme A biosynthesis; CoA from (R)-pantothenate: step 1/5. Functionally, catalyzes the phosphorylation of pantothenate (Pan), the first step in CoA biosynthesis. The chain is Type III pantothenate kinase from Leptospira interrogans serogroup Icterohaemorrhagiae serovar copenhageni (strain Fiocruz L1-130).